A 145-amino-acid polypeptide reads, in one-letter code: tRNA-specific adenosine deaminase (145 aa).

The CMP/dCMP-type deaminase domain occupies 1-116 (MREALKQAEI…SNLRYFNSKA (116 aa)). His-48 provides a ligand contact to Zn(2+). The Proton donor role is filled by Glu-50. Zn(2+) contacts are provided by Cys-78 and Cys-81.

The protein belongs to the cytidine and deoxycytidylate deaminase family. As to quaternary structure, homodimer. Requires Zn(2+) as cofactor.

It carries out the reaction adenosine(34) in tRNA + H2O + H(+) = inosine(34) in tRNA + NH4(+). Its function is as follows. Catalyzes the deamination of adenosine to inosine at the wobble position 34 of tRNA(Arg2). This chain is tRNA-specific adenosine deaminase, found in Rickettsia bellii (strain RML369-C).